The primary structure comprises 483 residues: Glycogen synthase (483 aa).

Position 15 (lysine 15) interacts with ADP-alpha-D-glucose.

It belongs to the glycosyltransferase 1 family. Bacterial/plant glycogen synthase subfamily.

It carries out the reaction [(1-&gt;4)-alpha-D-glucosyl](n) + ADP-alpha-D-glucose = [(1-&gt;4)-alpha-D-glucosyl](n+1) + ADP + H(+). It participates in glycan biosynthesis; glycogen biosynthesis. In terms of biological role, synthesizes alpha-1,4-glucan chains using ADP-glucose. The protein is Glycogen synthase of Exiguobacterium sibiricum (strain DSM 17290 / CCUG 55495 / CIP 109462 / JCM 13490 / 255-15).